The primary structure comprises 418 residues: Metacaspase-4 (418 aa).

Active-site residues include H86 and C139. C139 carries the post-translational modification S-nitrosocysteine. Residues 153–172 (GESTKKEAEDEDESEESSSR) form a disordered region.

This sequence belongs to the peptidase C14B family. Post-translationally, the two subunits are derived from the precursor sequence by an autocatalytic mechanism. In terms of tissue distribution, expressed in roots, cotyledons, leaves, cauline leaves, pollen and embryos.

It is found in the cytoplasm. The protein localises to the cytosol. Its activity is regulated as follows. Activated by Ca(2+) which induces self-processing and accelerates the rate of the enzyme activity, but has no effect on Km. Cysteine protease that cleaves specifically after arginine or lysine residues. Does not cleave caspase-specific substrates. Plays a positive regulatory role in biotic and abiotic stress-induced programmed cell death. This chain is Metacaspase-4 (AMC4), found in Arabidopsis thaliana (Mouse-ear cress).